The primary structure comprises 228 residues: Cytidylate kinase (228 aa).

ATP is bound at residue 17–25 (GPTASGKGT).

The protein belongs to the cytidylate kinase family. Type 1 subfamily.

The protein resides in the cytoplasm. The enzyme catalyses CMP + ATP = CDP + ADP. It catalyses the reaction dCMP + ATP = dCDP + ADP. The sequence is that of Cytidylate kinase from Burkholderia multivorans (strain ATCC 17616 / 249).